A 76-amino-acid polypeptide reads, in one-letter code: Exodeoxyribonuclease 7 small subunit (76 aa).

The protein belongs to the XseB family. As to quaternary structure, heterooligomer composed of large and small subunits.

The protein resides in the cytoplasm. The enzyme catalyses Exonucleolytic cleavage in either 5'- to 3'- or 3'- to 5'-direction to yield nucleoside 5'-phosphates.. Its function is as follows. Bidirectionally degrades single-stranded DNA into large acid-insoluble oligonucleotides, which are then degraded further into small acid-soluble oligonucleotides. The protein is Exodeoxyribonuclease 7 small subunit of Staphylococcus aureus (strain MRSA252).